Reading from the N-terminus, the 440-residue chain is Chromosome partition protein MukF (440 aa).

A leucine-zipper region spans residues 208–236; that stretch reads LSETSGTLRELQDTLEAAGDKLQANLLRI.

The protein belongs to the MukF family. Interacts, and probably forms a ternary complex, with MukE and MukB via its C-terminal region. The complex formation is stimulated by calcium or magnesium. It is required for an interaction between MukE and MukB.

Its subcellular location is the cytoplasm. The protein localises to the nucleoid. Involved in chromosome condensation, segregation and cell cycle progression. May participate in facilitating chromosome segregation by condensation DNA from both sides of a centrally located replisome during cell division. Not required for mini-F plasmid partitioning. Probably acts via its interaction with MukB and MukE. Overexpression results in anucleate cells. It has a calcium binding activity. This chain is Chromosome partition protein MukF, found in Escherichia coli (strain UTI89 / UPEC).